Reading from the N-terminus, the 510-residue chain is NAD(P)H-quinone oxidoreductase subunit 2 B, chloroplastic (510 aa).

12 helical membrane passes run 24-44, 57-77, 99-119, 124-144, 183-203, 227-247, 295-315, 323-343, 347-367, 395-415, 418-438, and 484-504; these read LLLF…GLIL, IPWL…ALLF, IFQF…VEYI, MAIT…MFLC, YLLM…WLYG, PGIS…LSPA, WHLL…LIAI, MLAY…IVGD, GYAS…GTFA, ALSS…AGFF, LHLF…IGLL, and MIVC…IIAI.

The protein belongs to the complex I subunit 2 family. As to quaternary structure, NDH is composed of at least 16 different subunits, 5 of which are encoded in the nucleus.

It is found in the plastid. It localises to the chloroplast thylakoid membrane. It catalyses the reaction a plastoquinone + NADH + (n+1) H(+)(in) = a plastoquinol + NAD(+) + n H(+)(out). The catalysed reaction is a plastoquinone + NADPH + (n+1) H(+)(in) = a plastoquinol + NADP(+) + n H(+)(out). In terms of biological role, NDH shuttles electrons from NAD(P)H:plastoquinone, via FMN and iron-sulfur (Fe-S) centers, to quinones in the photosynthetic chain and possibly in a chloroplast respiratory chain. The immediate electron acceptor for the enzyme in this species is believed to be plastoquinone. Couples the redox reaction to proton translocation, and thus conserves the redox energy in a proton gradient. The polypeptide is NAD(P)H-quinone oxidoreductase subunit 2 B, chloroplastic (Calycanthus floridus var. glaucus (Eastern sweetshrub)).